The chain runs to 142 residues: Large ribosomal subunit protein uL13 (142 aa).

Belongs to the universal ribosomal protein uL13 family. In terms of assembly, part of the 50S ribosomal subunit.

Its function is as follows. This protein is one of the early assembly proteins of the 50S ribosomal subunit, although it is not seen to bind rRNA by itself. It is important during the early stages of 50S assembly. The protein is Large ribosomal subunit protein uL13 of Pseudoalteromonas atlantica (strain T6c / ATCC BAA-1087).